The sequence spans 49 residues: Osteocalcin (49 aa).

The Gla domain maps to 1 to 47; it reads YLDSGLGAPVPYPDPLEPKREVCELNPNCDELADHIGFQEAYQRFYG. Ca(2+) is bound by residues Glu17, Glu21, Glu24, and Asp30. Residues Glu17, Glu21, and Glu24 each carry the 4-carboxyglutamate modification. Cysteines 23 and 29 form a disulfide.

This sequence belongs to the osteocalcin/matrix Gla protein family. In terms of processing, gamma-carboxyglutamate residues are formed by vitamin K dependent carboxylation by GGCX. These residues are essential for the binding of calcium. Decarboxylation promotes the hormone activity.

The protein localises to the secreted. Its function is as follows. The carboxylated form is one of the main organic components of the bone matrix, which constitutes 1-2% of the total bone protein. It acts as a negative regulator of bone formation and is required to limit bone formation without impairing bone resorption or mineralization. The carboxylated form binds strongly to apatite and calcium. Functionally, the uncarboxylated form acts as a hormone secreted by osteoblasts, which regulates different cellular processes, such as energy metabolism, male fertility and brain development. Regulates of energy metabolism by acting as a hormone favoring pancreatic beta-cell proliferation, insulin secretion and sensitivity and energy expenditure. Uncarboxylated osteocalcin hormone also promotes testosterone production in the testes: acts as a ligand for G protein-coupled receptor GPRC6A at the surface of Leydig cells, initiating a signaling response that promotes the expression of enzymes required for testosterone synthesis in a CREB-dependent manner. Also acts as a regulator of brain development: osteocalcin hormone crosses the blood-brain barrier and acts as a ligand for GPR158 on neurons, initiating a signaling response that prevents neuronal apoptosis in the hippocampus, favors the synthesis of all monoamine neurotransmitters and inhibits that of gamma-aminobutyric acid (GABA). Osteocalcin also crosses the placenta during pregnancy and maternal osteocalcin is required for fetal brain development. This is Osteocalcin (BGLAP) from Canis lupus familiaris (Dog).